A 324-amino-acid polypeptide reads, in one-letter code: Glyoxylate/hydroxypyruvate reductase B (324 aa).

Active-site residues include R237 and E266. Residue H285 is the Proton donor of the active site.

Belongs to the D-isomer specific 2-hydroxyacid dehydrogenase family. GhrB subfamily. In terms of assembly, homodimer.

Its subcellular location is the cytoplasm. The catalysed reaction is glycolate + NADP(+) = glyoxylate + NADPH + H(+). It carries out the reaction (R)-glycerate + NAD(+) = 3-hydroxypyruvate + NADH + H(+). It catalyses the reaction (R)-glycerate + NADP(+) = 3-hydroxypyruvate + NADPH + H(+). Functionally, catalyzes the NADPH-dependent reduction of glyoxylate and hydroxypyruvate into glycolate and glycerate, respectively. The chain is Glyoxylate/hydroxypyruvate reductase B from Escherichia fergusonii (strain ATCC 35469 / DSM 13698 / CCUG 18766 / IAM 14443 / JCM 21226 / LMG 7866 / NBRC 102419 / NCTC 12128 / CDC 0568-73).